Consider the following 602-residue polypeptide: uncharacterized protein (602 aa).

It belongs to the IIV-6 098R family.

This is an uncharacterized protein from Acheta domesticus (House cricket).